The following is a 235-amino-acid chain: Orotidine 5'-phosphate decarboxylase (235 aa).

Substrate contacts are provided by residues Asp-17, Lys-39, 66–75 (DMKLLDIDHT), Thr-121, Arg-182, Gln-191, and Arg-212. The Proton donor role is filled by Lys-68.

Belongs to the OMP decarboxylase family. Type 1 subfamily. Homodimer.

It catalyses the reaction orotidine 5'-phosphate + H(+) = UMP + CO2. It participates in pyrimidine metabolism; UMP biosynthesis via de novo pathway; UMP from orotate: step 2/2. Functionally, catalyzes the decarboxylation of orotidine 5'-monophosphate (OMP) to uridine 5'-monophosphate (UMP). In Bartonella bacilliformis, this protein is Orotidine 5'-phosphate decarboxylase.